The sequence spans 113 residues: Protein FAM27E3 (113 aa).

The interval 1-113 (MGIFQLLRDR…YTHRHTHRVL (113 aa)) is disordered. Residues 77 to 99 (QTDRERERNTQRLRDRERRENGR) show a composition bias toward basic and acidic residues. Positions 100–113 (HTHTYTHRHTHRVL) are enriched in basic residues.

Belongs to the FAM27 family.

In Homo sapiens (Human), this protein is Protein FAM27E3 (FAM27E3).